We begin with the raw amino-acid sequence, 192 residues long: Adenine phosphoribosyltransferase 2 (192 aa).

Belongs to the purine/pyrimidine phosphoribosyltransferase family. As to quaternary structure, homodimer.

The protein localises to the cytoplasm. The catalysed reaction is AMP + diphosphate = 5-phospho-alpha-D-ribose 1-diphosphate + adenine. It functions in the pathway purine metabolism; AMP biosynthesis via salvage pathway; AMP from adenine: step 1/1. In terms of biological role, catalyzes a salvage reaction resulting in the formation of AMP, that is energically less costly than de novo synthesis. May contribute to the recycling of adenine into adenylate nucleotides and the inactivation of cytokinins by phosphoribosylation. Possesses low activity toward adenine and cytokinins. In Arabidopsis thaliana (Mouse-ear cress), this protein is Adenine phosphoribosyltransferase 2 (APT2).